Here is a 223-residue protein sequence, read N- to C-terminus: Killer cell lectin-like receptor subfamily B member 1B allele A (223 aa).

Topologically, residues 1 to 45 (MDTAVVYADLHLARTGEPKREPPPSLSPDTCQCPRWHRLALKLGC) are cytoplasmic. The ITIM motif motif lies at 5-10 (VVYADL). The LCK-binding motif motif lies at 31–34 (CQCP). Residues 46–66 (ACLILLVLSVIGLGVLVLTLL) traverse the membrane as a helical; Signal-anchor for type II membrane protein segment. Residues 67–223 (QKPLIQNSPA…LKRESTCNDS (157 aa)) are Extracellular-facing. The 111-residue stretch at 101–211 (HQDKCFHVSQ…CDSDNIWICQ (111 aa)) folds into the C-type lectin domain. Intrachain disulfides connect Cys-122–Cys-210 and Cys-189–Cys-202.

Homodimer; disulfide-linked. Interacts with tyrosine kinase LCK. Binds PTPN6/SHP-1 in a phosphorylation-dependent manner. In terms of tissue distribution, expressed in a subset of natural killer cells.

The protein resides in the membrane. Receptor for CLEC2D/OCIL. Ligand-binding contributes to inhibition of cytotoxic natural killer (NK) cells. May mediate MHC class I-independent 'missing-self' recognition of allografts, tumor cells and virus-infected cells. The chain is Killer cell lectin-like receptor subfamily B member 1B allele A from Rattus norvegicus (Rat).